The sequence spans 139 residues: Cofilin (139 aa).

One can recognise an ADF-H domain in the interval 4 to 135; that stretch reads GVKVSQECLD…SYDTVLDKVS (132 aa).

Belongs to the actin-binding proteins ADF family.

Its subcellular location is the cytoplasm. The protein resides in the cytoskeleton. It is found in the nucleus matrix. Its function is as follows. Controls reversibly actin polymerization and depolymerization in a pH-sensitive manner. It has the ability to bind G- and F-actin in a 1:1 ratio of cofilin to actin. Binding to F-actin is regulated by tropomyosin. It is the major component of intranuclear and cytoplasmic actin rods. Required for accumulation of actin at the cell division site via depolymerizing actin at the cell ends. In association with myosin II has a role in the assembly of the contractile ring via severing actin filaments. Involved in the maintenance of the contractile ring once formed. In association with profilin and capping protein, has a role in the mitotic reorganization of the actin cytoskeleton. In Mycosarcoma maydis (Corn smut fungus), this protein is Cofilin (COF1).